Consider the following 1110-residue polypeptide: Serine/threonine-protein kinase PknK (1110 aa).

The Protein kinase domain occupies 26 to 283 (FDNVEEIGRG…TAADVGEELR (258 aa)). Residues 32–40 (IGRGGFGVV) and Lys-55 each bind ATP. Catalysis depends on Asp-149, which acts as the Proton acceptor. Mg(2+)-binding residues include Asn-154 and Asp-167. 2 positions are modified to phosphothreonine; by autocatalysis: Thr-179 and Thr-181. Positions 308–343 (RSPEAHAAHRHTGGGTPTVPTPPTPATKYRPSVPTG) are disordered.

The protein belongs to the protein kinase superfamily. Ser/Thr protein kinase family. As to quaternary structure, forms oligomeric complexes in solution. Post-translationally, can autophosphorylate the carboxyl terminal region in addition to Thr-179 and Thr-181.

The protein localises to the cytoplasm. Its subcellular location is the cell membrane. It is found in the secreted. It localises to the cell wall. It catalyses the reaction L-seryl-[protein] + ATP = O-phospho-L-seryl-[protein] + ADP + H(+). It carries out the reaction L-threonyl-[protein] + ATP = O-phospho-L-threonyl-[protein] + ADP + H(+). Its function is as follows. Key microbial factor involved in regulation of early and late events in tuberculosis infection, and in host-pathogen interactions. The chain is Serine/threonine-protein kinase PknK (pknK) from Mycobacterium tuberculosis (strain CDC 1551 / Oshkosh).